The sequence spans 293 residues: 4-diphosphocytidyl-2-C-methyl-D-erythritol kinase (293 aa).

Residue Lys16 is part of the active site. Residue 99-109 (PMGAGLGGGSS) coordinates ATP. Asp141 is a catalytic residue.

It belongs to the GHMP kinase family. IspE subfamily.

It catalyses the reaction 4-CDP-2-C-methyl-D-erythritol + ATP = 4-CDP-2-C-methyl-D-erythritol 2-phosphate + ADP + H(+). Its pathway is isoprenoid biosynthesis; isopentenyl diphosphate biosynthesis via DXP pathway; isopentenyl diphosphate from 1-deoxy-D-xylulose 5-phosphate: step 3/6. In terms of biological role, catalyzes the phosphorylation of the position 2 hydroxy group of 4-diphosphocytidyl-2C-methyl-D-erythritol. This Burkholderia mallei (strain NCTC 10247) protein is 4-diphosphocytidyl-2-C-methyl-D-erythritol kinase.